The following is a 283-amino-acid chain: Bifunctional protein FolD (283 aa).

Residues 165–167 and Ser190 each bind NADP(+); that span reads GAS.

Belongs to the tetrahydrofolate dehydrogenase/cyclohydrolase family. Homodimer.

It carries out the reaction (6R)-5,10-methylene-5,6,7,8-tetrahydrofolate + NADP(+) = (6R)-5,10-methenyltetrahydrofolate + NADPH. It catalyses the reaction (6R)-5,10-methenyltetrahydrofolate + H2O = (6R)-10-formyltetrahydrofolate + H(+). Its pathway is one-carbon metabolism; tetrahydrofolate interconversion. In terms of biological role, catalyzes the oxidation of 5,10-methylenetetrahydrofolate to 5,10-methenyltetrahydrofolate and then the hydrolysis of 5,10-methenyltetrahydrofolate to 10-formyltetrahydrofolate. This Cupriavidus pinatubonensis (strain JMP 134 / LMG 1197) (Cupriavidus necator (strain JMP 134)) protein is Bifunctional protein FolD.